The chain runs to 130 residues: Methylglyoxal synthase (130 aa).

Residues 1-130 form the MGS-like domain; sequence MSKPRIALIA…DLARNMQDVC (130 aa). Residues His-11, Lys-15, 37–40, and 57–58 contribute to the substrate site; these read TGTT and SG. Catalysis depends on Asp-63, which acts as the Proton donor/acceptor. His-90 contacts substrate.

It belongs to the methylglyoxal synthase family.

It carries out the reaction dihydroxyacetone phosphate = methylglyoxal + phosphate. Its function is as follows. Catalyzes the formation of methylglyoxal from dihydroxyacetone phosphate. In Burkholderia orbicola (strain AU 1054), this protein is Methylglyoxal synthase.